Consider the following 243-residue polypeptide: Terpene cyclase dpmpB (243 aa).

7 helical membrane passes run 13–33, 51–71, 78–98, 112–132, 141–161, 169–189, and 207–227; these read FLEV…GWTA, ALMP…ILPF, WVHV…IKFA, LTWI…ALAA, AWSA…QLLC, SYLL…QDIL, and LWFV…LWYV.

This sequence belongs to the paxB family.

The protein resides in the membrane. Its pathway is secondary metabolite biosynthesis; terpenoid biosynthesis. Its function is as follows. Terpene cyclase; part of the gene cluster that mediates the biosynthesis of diterpenoid pyrones. The first step of the pathway is the synthesis of the alpha-pyrone moiety by the polyketide synthase dpmpA via condensation of one acetyl-CoA starter unit with 3 malonyl-CoA units and 2 methylations. The alpha-pyrone is then combined with geranylgeranyl pyrophosphate (GGPP) formed by the GGPP synthase dpmpD through the action of the prenyltransferase dpmpC to yield a linear alpha-pyrone diterpenoid. Subsequent steps in the diterpenoid pyrone biosynthetic pathway involve the decalin core formation, which is initiated by the epoxidation of the C10-C11 olefin by the FAD-dependent oxidoreductase dpmpE, and is followed by a cyclization cascade catalyzed by the terpene cyclase dpmpB. The short chain dehydrogenase/reductase dpmpG then oxidizes the 8S hydroxy group to a ketone and the short chain dehydrogenase/reductase dpmpH reduces the ketone to the 8R hydroxy group to yield higginsianin B. Higginsianin B is further methylated by the methyltransferase dpmpI to produce the intermediate named FDDP B. The cytochrome P450 monooxygenase dpmpJ then oxidizes the C-26 methyl to primary alcohol, producing the final diterpenoid pyrone with a C-26 primary alcohol on the gamma-pyrone moiety named FDDP C. This is Terpene cyclase dpmpB from Macrophomina phaseolina (strain MS6) (Charcoal rot fungus).